The following is a 272-amino-acid chain: Small ribosomal subunit protein mS23 (272 aa).

The segment at 236-272 (AGATGGAKEESDPAILPELEVAESTSESAQPAEIRTG) is disordered.

Belongs to the mitochondrion-specific ribosomal protein mS23 family. As to quaternary structure, component of the mitochondrial small ribosomal subunit.

The protein localises to the mitochondrion. The polypeptide is Small ribosomal subunit protein mS23 (RSM25) (Coccidioides immitis (strain RS) (Valley fever fungus)).